The primary structure comprises 147 residues: Ubiquitin-conjugating enzyme E2-16 kDa (147 aa).

Positions 1–147 (MALKRINKEL…AREWTRKYAI (147 aa)) constitute a UBC core domain. Cys107 serves as the catalytic Glycyl thioester intermediate.

Belongs to the ubiquitin-conjugating enzyme family.

It catalyses the reaction S-ubiquitinyl-[E1 ubiquitin-activating enzyme]-L-cysteine + [E2 ubiquitin-conjugating enzyme]-L-cysteine = [E1 ubiquitin-activating enzyme]-L-cysteine + S-ubiquitinyl-[E2 ubiquitin-conjugating enzyme]-L-cysteine.. It participates in protein modification; protein ubiquitination. Catalyzes the covalent attachment of ubiquitin to other proteins. This chain is Ubiquitin-conjugating enzyme E2-16 kDa (UBC1), found in Pyricularia oryzae (strain 70-15 / ATCC MYA-4617 / FGSC 8958) (Rice blast fungus).